We begin with the raw amino-acid sequence, 87 residues long: Colicin-E7 immunity protein (87 aa).

Belongs to the colicins ColE2/ColE8/ColE9 and pyocins S1/S2 family.

Its function is as follows. This protein is able to protect a cell, which harbors the plasmid ColE7 encoding colicin E7, against colicin E7, it binds specifically to the DNase-type colicin and inhibits its bactericidal activity. Dimeric ImmE7 may possess a RNase activity that cleaves its own mRNA at a specific site and thus autoregulates translational expression of the downstream ceiE7 gene as well as degradation of the upstream ceaE7 mRNA. The chain is Colicin-E7 immunity protein (imm) from Escherichia coli.